Here is a 573-residue protein sequence, read N- to C-terminus: Protein FAM200A (573 aa).

The disordered stretch occupies residues 1–51 (MTPESRDTTDLSPGGTQEMEGIVIVKVEEEDEEDHFQKERNKVESSPQVLS). At 1–513 (MTPESRDTTD…DDFPLLSRKS (513 aa)) the chain is on the extracellular side. A helical transmembrane segment spans residues 514 to 533 (ILLLLPFTTTYLCELGFSIL). Topologically, residues 534–573 (TRLKTKKRNRLNSAPDMRVALSSCVPDWKELMNRQAHPSH) are cytoplasmic.

Belongs to the FAM200 family.

The protein resides in the membrane. The sequence is that of Protein FAM200A (FAM200A) from Homo sapiens (Human).